Reading from the N-terminus, the 346-residue chain is Phosphoribosylformylglycinamidine cyclo-ligase (346 aa).

Belongs to the AIR synthase family.

It localises to the cytoplasm. The catalysed reaction is 2-formamido-N(1)-(5-O-phospho-beta-D-ribosyl)acetamidine + ATP = 5-amino-1-(5-phospho-beta-D-ribosyl)imidazole + ADP + phosphate + H(+). The protein operates within purine metabolism; IMP biosynthesis via de novo pathway; 5-amino-1-(5-phospho-D-ribosyl)imidazole from N(2)-formyl-N(1)-(5-phospho-D-ribosyl)glycinamide: step 2/2. The chain is Phosphoribosylformylglycinamidine cyclo-ligase from Bacillus cereus (strain AH187).